Here is a 289-residue protein sequence, read N- to C-terminus: Cyclin-dependent kinase inhibitor 4 (289 aa).

Disordered regions lie at residues 1–31, 56–160, and 227–248; these read MGKYIRKSKIDGAGAGAGGGGGGGGGGESSI, LQQQ…VSES, and SESNQREDSLSRSHRRRPTTPE. The segment covering 13–28 has biased composition (gly residues); that stretch reads AGAGAGGGGGGGGGGE. The segment covering 56–80 has biased composition (low complexity); the sequence is LQQQQQRCLLQKPSSPSSLPPTSAS. Over residues 134 to 144 the composition is skewed to polar residues; sequence CGRNPNPRSNL.

Belongs to the CDI family. ICK/KRP subfamily. As to quaternary structure, specifically interacts with CDKA-1, but not with CDKB1-1. Interacts with CYCD4-1. Binds to FBL17. Expressed in leaves and flowers and at lower levels in roots.

The protein resides in the nucleus. It localises to the nucleoplasm. Binds and inhibits CYCD2-1/CDKA-1 complex kinase activity. May target specifically CDKA-1. This is Cyclin-dependent kinase inhibitor 4 (KRP4) from Arabidopsis thaliana (Mouse-ear cress).